The chain runs to 292 residues: MQELIKRTLPQDDALNQAIVNELRSQNWAGFLNYSQVQQLCHNFELTPLKLAMHLLPLAASYSHTAISHFNVGAIAIGEQGDFYFGANQEFANSAIQQTIHAEQSAISHAWLRNERRISDMVVNYTPCGHCRQFMNELHGAEKISIHLPHSQNNPLHSYLPDAFGPKDLDIAAHLLAEENHDLVADHQDDLVNQAILAANQSHCPYSNSPHGIAILFKNGDVVTGRYAENAAFNPSLPALQTALNFAYLNDKKLSDIERIVMAEKALKLSHKTMAETLLSTLTSVELEYYSL.

CMP/dCMP-type deaminase domains are found at residues 47–167 (TPLK…FGPK) and 186–292 (DHQD…YYSL). 88–90 (NQE) serves as a coordination point for substrate. His101 contacts Zn(2+). Catalysis depends on Glu103, which acts as the Proton donor. The Zn(2+) site is built by Cys128 and Cys131.

Belongs to the cytidine and deoxycytidylate deaminase family. In terms of assembly, homodimer. Requires Zn(2+) as cofactor.

It carries out the reaction cytidine + H2O + H(+) = uridine + NH4(+). It catalyses the reaction 2'-deoxycytidine + H2O + H(+) = 2'-deoxyuridine + NH4(+). In terms of biological role, this enzyme scavenges exogenous and endogenous cytidine and 2'-deoxycytidine for UMP synthesis. The polypeptide is Cytidine deaminase (Haemophilus influenzae (strain 86-028NP)).